The following is a 665-amino-acid chain: Alpha-1,4-glucan:maltose-1-phosphate maltosyltransferase (665 aa).

3 residues coordinate alpha-maltose 1-phosphate: lysine 255, glutamine 315, and aspartate 350. The Nucleophile role is filled by aspartate 386. Asparagine 387 contributes to the alpha-maltose 1-phosphate binding site. Glutamate 415 (proton donor) is an active-site residue. Residue 526 to 527 participates in alpha-maltose 1-phosphate binding; sequence KY.

It belongs to the glycosyl hydrolase 13 family. GlgE subfamily. In terms of assembly, homodimer.

The catalysed reaction is alpha-maltose 1-phosphate + [(1-&gt;4)-alpha-D-glucosyl](n) = [(1-&gt;4)-alpha-D-glucosyl](n+2) + phosphate. Maltosyltransferase that uses maltose 1-phosphate (M1P) as the sugar donor to elongate linear or branched alpha-(1-&gt;4)-glucans. Is involved in a branched alpha-glucan biosynthetic pathway from trehalose, together with TreS, Mak and GlgB. The chain is Alpha-1,4-glucan:maltose-1-phosphate maltosyltransferase from Myxococcus xanthus (strain DK1622).